The chain runs to 76 residues: Small ribosomal subunit protein bS16 (76 aa).

Belongs to the bacterial ribosomal protein bS16 family.

This chain is Small ribosomal subunit protein bS16, found in Helicobacter acinonychis (strain Sheeba).